We begin with the raw amino-acid sequence, 220 residues long: NADH-quinone oxidoreductase subunit I (220 aa).

4Fe-4S ferredoxin-type domains lie at 71–102 and 112–141; these read LQRL…IITH and DSYT…MGNR. [4Fe-4S] cluster is bound by residues C82, C85, C88, C92, C121, C124, C127, and C131. The segment at 187–220 is disordered; sequence MQATPLDYVQEPSKEESKEETPTNPESNKGDENV. Over residues 198 to 207 the composition is skewed to basic and acidic residues; that stretch reads PSKEESKEET.

The protein belongs to the complex I 23 kDa subunit family. NDH-1 is composed of 14 different subunits. Subunits NuoA, H, J, K, L, M, N constitute the membrane sector of the complex. It depends on [4Fe-4S] cluster as a cofactor.

It localises to the cell inner membrane. The enzyme catalyses a quinone + NADH + 5 H(+)(in) = a quinol + NAD(+) + 4 H(+)(out). In terms of biological role, NDH-1 shuttles electrons from NADH, via FMN and iron-sulfur (Fe-S) centers, to quinones in the respiratory chain. The immediate electron acceptor for the enzyme in this species is believed to be ubiquinone. Couples the redox reaction to proton translocation (for every two electrons transferred, four hydrogen ions are translocated across the cytoplasmic membrane), and thus conserves the redox energy in a proton gradient. This chain is NADH-quinone oxidoreductase subunit I, found in Helicobacter pylori (strain Shi470).